Consider the following 1040-residue polypeptide: Multidrug resistance protein MdtB (1040 aa).

12 helical membrane-spanning segments follow: residues 16–36, 347–367, 369–389, 396–416, 440–460, 472–492, 537–557, 863–883, 888–908, 911–931, 968–988, and 998–1018; these read FIMR…AGII, LMMA…NIPA, IIPG…MVFL, LTLM…IVVI, IGFT…PLLF, FAIT…TLTP, WLTL…WVFI, LGST…VLGI, FIHP…ALLA, IAGS…IGIV, ILMT…STGV, and IGMV…TPVI.

It belongs to the resistance-nodulation-cell division (RND) (TC 2.A.6) family. MdtB subfamily. As to quaternary structure, part of a tripartite efflux system composed of MdtA, MdtB and MdtC. MdtB forms a heteromultimer with MdtC.

Its subcellular location is the cell inner membrane. In terms of biological role, the MdtABC tripartite complex confers resistance against novobiocin and deoxycholate. The sequence is that of Multidrug resistance protein MdtB from Escherichia coli (strain K12 / MC4100 / BW2952).